We begin with the raw amino-acid sequence, 1158 residues long: ATP-dependent helicase/deoxyribonuclease subunit B (1158 aa).

An ATP-binding site is contributed by 8–15 (GRAGTGKS). [4Fe-4S] cluster contacts are provided by Cys-791, Cys-1112, Cys-1115, and Cys-1121.

This sequence belongs to the helicase family. AddB/RexB type 1 subfamily. Heterodimer of AddA and AddB. Mg(2+) is required as a cofactor. It depends on [4Fe-4S] cluster as a cofactor.

The heterodimer acts as both an ATP-dependent DNA helicase and an ATP-dependent, dual-direction single-stranded exonuclease. Recognizes the chi site generating a DNA molecule suitable for the initiation of homologous recombination. The AddB subunit has 5' -&gt; 3' nuclease activity but not helicase activity. The chain is ATP-dependent helicase/deoxyribonuclease subunit B from Clostridium perfringens (strain SM101 / Type A).